An 861-amino-acid chain; its full sequence is E3 ubiquitin-protein ligase HECTD3 (861 aa).

The residue at position 2 (alanine 2) is an N-acetylalanine. At serine 12 the chain carries Phosphoserine. Residues 219–397 (DEDLIHFLYD…TSLVRYPRLE (179 aa)) enclose the DOC domain. The HECT domain maps to 512 to 857 (YEKPLDYRWP…NCVAIDTDMS (346 aa)). The active-site Glycyl thioester intermediate is the cysteine 823.

Interacts with TRIOBP. Interacts with STX8.

Its subcellular location is the cytoplasm. It is found in the perinuclear region. It carries out the reaction S-ubiquitinyl-[E2 ubiquitin-conjugating enzyme]-L-cysteine + [acceptor protein]-L-lysine = [E2 ubiquitin-conjugating enzyme]-L-cysteine + N(6)-ubiquitinyl-[acceptor protein]-L-lysine.. The protein operates within protein modification; protein ubiquitination. Functionally, E3 ubiquitin ligases accepts ubiquitin from an E2 ubiquitin-conjugating enzyme in the form of a thioester and then directly transfers the ubiquitin to targeted substrates. Mediates ubiquitination of TRIOBP and its subsequent proteasomal degradation, thus facilitating cell cycle progression by regulating the turn-over of TRIOBP. Mediates also ubiquitination of STX8. The polypeptide is E3 ubiquitin-protein ligase HECTD3 (HECTD3) (Homo sapiens (Human)).